The primary structure comprises 332 residues: Lipoyl synthase (332 aa).

7 residues coordinate [4Fe-4S] cluster: cysteine 74, cysteine 79, cysteine 85, cysteine 100, cysteine 104, cysteine 107, and serine 314. In terms of domain architecture, Radical SAM core spans cysteine 85–serine 303.

This sequence belongs to the radical SAM superfamily. Lipoyl synthase family. [4Fe-4S] cluster serves as cofactor.

It is found in the cytoplasm. It catalyses the reaction [[Fe-S] cluster scaffold protein carrying a second [4Fe-4S](2+) cluster] + N(6)-octanoyl-L-lysyl-[protein] + 2 oxidized [2Fe-2S]-[ferredoxin] + 2 S-adenosyl-L-methionine + 4 H(+) = [[Fe-S] cluster scaffold protein] + N(6)-[(R)-dihydrolipoyl]-L-lysyl-[protein] + 4 Fe(3+) + 2 hydrogen sulfide + 2 5'-deoxyadenosine + 2 L-methionine + 2 reduced [2Fe-2S]-[ferredoxin]. Its pathway is protein modification; protein lipoylation via endogenous pathway; protein N(6)-(lipoyl)lysine from octanoyl-[acyl-carrier-protein]: step 2/2. Functionally, catalyzes the radical-mediated insertion of two sulfur atoms into the C-6 and C-8 positions of the octanoyl moiety bound to the lipoyl domains of lipoate-dependent enzymes, thereby converting the octanoylated domains into lipoylated derivatives. In Polaromonas naphthalenivorans (strain CJ2), this protein is Lipoyl synthase.